A 538-amino-acid polypeptide reads, in one-letter code: MVKQLKFSEDARQAMLRGVDQLANAVKVTIGPKGRNVVLDKEFTAPLITNDGVTIAKEIELEDPYENMGAKLVQEVANKTNEIAGDGTTTATVLAQAMIQEGLKNVTSGANPVGLRQGIDKAVKVAVEALHENSQKVENKNEIAQVGAISAADEEIGRYISEAMEKVGNDGVITIEESNGLNTELEVVEGMQFDRGYQSPYMVTDSDKMVAELERPYILVTDKKISSFQDILPLLEQVVQSNRPILIVADEVEGDALTNIVLNRMRGTFTAVAVKAPGFGDRRKAMLEDLAILTGAQVITDDLGLDLKDASIDMLGTASKVEVTKDNTTVVDGDGDENSIDARVSQLKSQIEETESDFDREKLQERLAKLAGGVAVIKVGAASETELKERKLRIEDALNSTRAAVEEGIVAGGGTALVNVYQKVSEIEAEGDIETGVNIVLKALTAPVRQIAENAGLEGSVIVERLKNAEPGVGFNAATNEWVNMLEAGIVDPTKVTRSALQHAASVAAMFLTTEAVVASIPEKNNDQPNMGGMPGMM.

Residues 29–32, 86–90, Gly413, 476–478, and Asp492 contribute to the ATP site; these read TIGP, DGTTT, and NAA.

It belongs to the chaperonin (HSP60) family. As to quaternary structure, forms a cylinder of 14 subunits composed of two heptameric rings stacked back-to-back. Interacts with the co-chaperonin GroES.

It is found in the cytoplasm. It carries out the reaction ATP + H2O + a folded polypeptide = ADP + phosphate + an unfolded polypeptide.. Together with its co-chaperonin GroES, plays an essential role in assisting protein folding. The GroEL-GroES system forms a nano-cage that allows encapsulation of the non-native substrate proteins and provides a physical environment optimized to promote and accelerate protein folding. The sequence is that of Chaperonin GroEL from Staphylococcus aureus (strain Mu3 / ATCC 700698).